The primary structure comprises 249 residues: Cytochrome c oxidase subunit 2 (249 aa).

The next 2 membrane-spanning stretches (helical) occupy residues 40–60 and 81–101; these read NIMF…YTIT and IIWT…SFIL. 6 residues coordinate Cu cation: His184, Cys219, Glu221, Cys223, His227, and Met230. Glu221 lines the Mg(2+) pocket.

It belongs to the cytochrome c oxidase subunit 2 family. As to quaternary structure, component of the cytochrome c oxidase (complex IV, CIV), a multisubunit enzyme composed of a catalytic core of 3 subunits and several supernumerary subunits. The complex exists as a monomer or a dimer and forms supercomplexes (SCs) in the inner mitochondrial membrane with ubiquinol-cytochrome c oxidoreductase (cytochrome b-c1 complex, complex III, CIII). Requires Cu cation as cofactor.

The protein resides in the mitochondrion inner membrane. The enzyme catalyses 4 Fe(II)-[cytochrome c] + O2 + 8 H(+)(in) = 4 Fe(III)-[cytochrome c] + 2 H2O + 4 H(+)(out). Component of the cytochrome c oxidase, the last enzyme in the mitochondrial electron transport chain which drives oxidative phosphorylation. The respiratory chain contains 3 multisubunit complexes succinate dehydrogenase (complex II, CII), ubiquinol-cytochrome c oxidoreductase (cytochrome b-c1 complex, complex III, CIII) and cytochrome c oxidase (complex IV, CIV), that cooperate to transfer electrons derived from NADH and succinate to molecular oxygen, creating an electrochemical gradient over the inner membrane that drives transmembrane transport and the ATP synthase. Cytochrome c oxidase is the component of the respiratory chain that catalyzes the reduction of oxygen to water. Electrons originating from reduced cytochrome c in the intermembrane space (IMS) are transferred via the dinuclear copper A center (CU(A)) of subunit 2 and heme A of subunit 1 to the active site in subunit 1, a binuclear center (BNC) formed by heme A3 and copper B (CU(B)). The BNC reduces molecular oxygen to 2 water molecules using 4 electrons from cytochrome c in the IMS and 4 protons from the mitochondrial matrix. This chain is Cytochrome c oxidase subunit 2 (COX2), found in Vanderwaltozyma polyspora (strain ATCC 22028 / DSM 70294 / BCRC 21397 / CBS 2163 / NBRC 10782 / NRRL Y-8283 / UCD 57-17) (Kluyveromyces polysporus).